A 437-amino-acid chain; its full sequence is ATP-dependent protease ATPase subunit HslU (437 aa).

Residues Val-18, 60–65 (GCGKTE), Asp-250, Glu-315, and Arg-387 each bind ATP.

It belongs to the ClpX chaperone family. HslU subfamily. A double ring-shaped homohexamer of HslV is capped on each side by a ring-shaped HslU homohexamer. The assembly of the HslU/HslV complex is dependent on binding of ATP.

The protein resides in the cytoplasm. ATPase subunit of a proteasome-like degradation complex; this subunit has chaperone activity. The binding of ATP and its subsequent hydrolysis by HslU are essential for unfolding of protein substrates subsequently hydrolyzed by HslV. HslU recognizes the N-terminal part of its protein substrates and unfolds these before they are guided to HslV for hydrolysis. This is ATP-dependent protease ATPase subunit HslU from Methylorubrum extorquens (strain PA1) (Methylobacterium extorquens).